We begin with the raw amino-acid sequence, 132 residues long: uncharacterized protein (132 aa).

The segment at 113 to 132 (LDPQSPLHSPPLSTSPDSRR) is disordered.

This is an uncharacterized protein from Saccharomyces cerevisiae (strain ATCC 204508 / S288c) (Baker's yeast).